We begin with the raw amino-acid sequence, 129 residues long: Small ribosomal subunit protein uS8mz (129 aa).

Belongs to the universal ribosomal protein uS8 family. Component of the mitochondrial ribosome small subunit.

The protein resides in the mitochondrion. The protein is Small ribosomal subunit protein uS8mz (RPS15AB) of Arabidopsis thaliana (Mouse-ear cress).